Consider the following 340-residue polypeptide: TD and POZ domain-containing protein 5 (340 aa).

The 131-residue stretch at 19–149 (EFCYVWTIRN…ENKLTLCCKV (131 aa)) folds into the MATH domain. The BTB domain maps to 188–255 (TDCCLLVAGH…IYTGKAPHLQ (68 aa)).

It belongs to the Tdpoz family.

The protein is TD and POZ domain-containing protein 5 of Mus musculus (Mouse).